A 38-amino-acid polypeptide reads, in one-letter code: U9-ctenitoxin-Pk1a (38 aa).

4 disulfide bridges follow: Cys-2-Cys-17, Cys-9-Cys-22, Cys-16-Cys-36, and Cys-24-Cys-34.

In terms of tissue distribution, expressed by the venom gland.

It localises to the secreted. In Phoneutria keyserlingi (Brazilian wandering spider), this protein is U9-ctenitoxin-Pk1a.